Here is a 434-residue protein sequence, read N- to C-terminus: MSFNTLIDWNSCSPEQQRALLTRPAISASDSITRTVSDILYNVKTRGDDALREYSAKFDKTEVTALRVTPEEIAAAGARLSDELKQAMAAAVKNIETFHSAQTLPPVDVETQPGVRCQQVTRPVASVGLYIPGGSAPLFSTVLMLATPARIAGCQKVVLCSPPPIADEILYAAQLCGVQEIFNVGGAQAIAALAFGSESVPKVDKIFGPGNAFVTEAKRQVSQRLDGAAIDMPAGPSEVLVIADSGATPDFVASDLLSQAEHGPDSQVILLTPDADIARKVAEAVERQLAELPRAGTARQALSASRLIVTKDLAQCVAISNQYGPEHLIIQTRNARDLVDAITSAGSVFLGDWSPESAGDYASGTNHVLPTYGYTATCSSLGLADFQKRMTVQELSKAGFSALASTIETLAAAERLTAHKNAVTLRVNALKEQA.

Residues Y130, Q188, and N211 each coordinate NAD(+). Substrate is bound by residues S237, Q259, and H262. Residues Q259 and H262 each contribute to the Zn(2+) site. Catalysis depends on proton acceptor residues E326 and H327. Substrate-binding residues include H327, D360, E414, and H419. D360 contributes to the Zn(2+) binding site. Position 419 (H419) interacts with Zn(2+).

The protein belongs to the histidinol dehydrogenase family. Homodimer. The cofactor is Zn(2+).

The catalysed reaction is L-histidinol + 2 NAD(+) + H2O = L-histidine + 2 NADH + 3 H(+). It participates in amino-acid biosynthesis; L-histidine biosynthesis; L-histidine from 5-phospho-alpha-D-ribose 1-diphosphate: step 9/9. Its function is as follows. Catalyzes the sequential NAD-dependent oxidations of L-histidinol to L-histidinaldehyde and then to L-histidine. This chain is Histidinol dehydrogenase, found in Salmonella typhi.